Here is a 503-residue protein sequence, read N- to C-terminus: Lysine--tRNA ligase (503 aa).

Glu412 and Glu419 together coordinate Mg(2+).

The protein belongs to the class-II aminoacyl-tRNA synthetase family. In terms of assembly, homodimer. The cofactor is Mg(2+).

The protein localises to the cytoplasm. It catalyses the reaction tRNA(Lys) + L-lysine + ATP = L-lysyl-tRNA(Lys) + AMP + diphosphate. This chain is Lysine--tRNA ligase, found in Buchnera aphidicola subsp. Schizaphis graminum (strain Sg).